A 299-amino-acid polypeptide reads, in one-letter code: ATP phosphoribosyltransferase (299 aa).

This sequence belongs to the ATP phosphoribosyltransferase family. Long subfamily. The cofactor is Mg(2+).

It is found in the cytoplasm. The enzyme catalyses 1-(5-phospho-beta-D-ribosyl)-ATP + diphosphate = 5-phospho-alpha-D-ribose 1-diphosphate + ATP. It participates in amino-acid biosynthesis; L-histidine biosynthesis; L-histidine from 5-phospho-alpha-D-ribose 1-diphosphate: step 1/9. With respect to regulation, feedback inhibited by histidine. In terms of biological role, catalyzes the condensation of ATP and 5-phosphoribose 1-diphosphate to form N'-(5'-phosphoribosyl)-ATP (PR-ATP). Has a crucial role in the pathway because the rate of histidine biosynthesis seems to be controlled primarily by regulation of HisG enzymatic activity. The polypeptide is ATP phosphoribosyltransferase (Shewanella sediminis (strain HAW-EB3)).